Consider the following 918-residue polypeptide: Inner centromere protein (918 aa).

Positions 48–105 (EFSKEPELMPKTPSQKNRRKKRRISYVQDENRDPIRRRLSRRKSRSSQLSSRRLRSKD) are disordered. 4 positions are modified to phosphoserine: Ser72, Ser119, Ser143, and Ser148. An interaction with CBX5 region spans residues 124-248 (VTRAAAAAAA…TPQDPKGQGV (125 aa)). Positions 138-159 (LAAPSSPTPESPTMLTKKPEDN) are disordered. A Phosphothreonine modification is found at Thr150. Residues 167-171 (PVVEI) carry the PXVXL/I motif motif. A disordered region spans residues 190-253 (EPLPRTLSPT…KGQGVGTGRS (64 aa)). Phosphothreonine is present on Thr195. Ser197 is modified (phosphoserine). The segment covering 197–208 (SPTPASATAPTS) has biased composition (low complexity). Phosphothreonine is present on residues Thr199 and Thr213. Ser214 is subject to Phosphoserine. A phosphothreonine mark is found at Thr219 and Thr239. Residues Ser263, Ser269, and Ser275 each carry the phosphoserine modification. A disordered region spans residues 285-316 (ILPDNFSTPTGSRTDSQSVRHSPIAPSSPSPQ). Residues 289 to 316 (NFSTPTGSRTDSQSVRHSPIAPSSPSPQ) show a composition bias toward polar residues. Thr292 bears the Phosphothreonine mark. Phosphoserine is present on residues Ser296, Ser306, Ser312, Ser314, and Ser330. The interval 371–489 (VGSEQKEPPE…SSPCPASKVV (119 aa)) is disordered. The segment covering 384-394 (PVAAAEPEVPE) has biased composition (low complexity). Composition is skewed to polar residues over residues 395 to 413 (NNGN…NSTP) and 421 to 431 (SPETPSAGQQE). A Phosphoserine modification is found at Ser400. Thr406 bears the Phosphothreonine mark. The segment covering 432-441 (AKTDQADGPR) has biased composition (basic and acidic residues). Position 446 is a phosphoserine (Ser446). Residues 459–471 (ELDEEQHLEDEEL) show a composition bias toward acidic residues. Residue Ser476 is modified to Phosphoserine. Thr478 is subject to Phosphothreonine. A phosphoserine mark is found at Ser480, Ser510, and Ser514. Residues 531–765 (KCSFVEKERQ…EEKKKKEEQQ (235 aa)) form an SAH region. 2 stretches are compositionally biased toward basic and acidic residues: residues 607–623 (DEKT…EEKA) and 630–640 (KKMEEVEARRK). Disordered stretches follow at residues 607–640 (DEKT…ARRK), 660–740 (HQEL…LQER), 754–787 (ELEE…AGAS), and 826–845 (LNSD…IPTW). The span at 754–782 (ELEEKKKKEEQQRLAERQLQEEQEKKAKE) shows a compositional bias: basic and acidic residues. The interaction with AURKC stretch occupies residues 822–897 (YGMDLNSDDS…YHKRTSSAVW (76 aa)). Residues 826–900 (LNSDDSTDDE…RTSSAVWNSP (75 aa)) are IN box. Phosphoserine is present on residues Ser828 and Ser831. Thr832 is modified (phosphothreonine). A Phosphothreonine; by AURKB and AURKC modification is found at Thr892. Residues Ser893 and Ser894 each carry the phosphoserine; by AURKB and AURKC modification. Residues Ser899 and Ser914 each carry the phosphoserine modification.

This sequence belongs to the INCENP family. In terms of assembly, component of the chromosomal passenger complex (CPC) composed of at least BIRC5/survivin, CDCA8/borealin, INCENP, AURKB or AURKC; in the complex binds directly to AURKB or AURKC via the IN box, and forms a triple-helix bundle-based subcomplex with BIRC5 and CDCA8 via its N-terminus. The reported homodimerization is questioned as the SAH domain is shown to be monomeric. Interacts with H2AZ1. Interacts with CBX1 and CBX3. Interacts with tubulin beta chain. Interacts with EVI5. Interacts with CBX5; POGZ and INCENP compete for interaction with CBX5; regulates INCENP (and probably CPC) localization to centromeres in interphase and not required for proper mitotic progression or sister chromatid cohesion. Interacts with POGZ. Interacts with JTB. Post-translationally, phosphorylation by AURKB or AURKC at its C-terminal part is important for AURKB or AURKC activation by INCENP.

Its subcellular location is the nucleus. The protein localises to the chromosome. The protein resides in the centromere. It localises to the cytoplasm. It is found in the cytoskeleton. Its subcellular location is the spindle. The protein localises to the midbody. The protein resides in the kinetochore. Its function is as follows. Component of the chromosomal passenger complex (CPC), a complex that acts as a key regulator of mitosis. The CPC complex has essential functions at the centromere in ensuring correct chromosome alignment and segregation and is required for chromatin-induced microtubule stabilization and spindle assembly. Acts as a scaffold regulating CPC localization and activity. The C-terminus associates with AURKB or AURKC, the N-terminus associated with BIRC5/survivin and CDCA8/borealin tethers the CPC to the inner centromere, and the microtubule binding activity within the central SAH domain directs AURKB/C toward substrates near microtubules. The flexibility of the SAH domain is proposed to allow AURKB/C to follow substrates on dynamic microtubules while ensuring CPC docking to static chromatin. Activates AURKB and AURKC. Required for localization of CBX5 to mitotic centromeres. Controls the kinetochore localization of BUB1. This chain is Inner centromere protein (INCENP), found in Homo sapiens (Human).